The sequence spans 399 residues: Subtilisin-like protease 4 (399 aa).

An N-terminal signal peptide occupies residues 1–19; it reads MVCLKTLSVFLAAFAVADA. The propeptide occupies 20–118; it reads RAVFKTQSNK…VEQDQVVRIS (99 aa). In terms of domain architecture, Inhibitor I9 spans 38–117; it reads YIVVMKDGVS…YVEQDQVVRI (80 aa). Residues 128 to 399 form the Peptidase S8 domain; sequence SWGLGRVSHR…NRLLYNGSGQ (272 aa). Catalysis depends on charge relay system residues Asp-160 and His-191. N-linked (GlcNAc...) asparagine glycosylation is present at Asn-252. Ser-346 acts as the Charge relay system in catalysis. Over residues 380 to 392 the composition is skewed to polar residues; that stretch reads AISNPGSGTTNRL. The tract at residues 380 to 399 is disordered; it reads AISNPGSGTTNRLLYNGSGQ. Asn-395 is a glycosylation site (N-linked (GlcNAc...) asparagine).

Belongs to the peptidase S8 family.

It is found in the secreted. Secreted subtilisin-like serine protease with keratinolytic activity that contributes to pathogenicity. The protein is Subtilisin-like protease 4 (SUB4) of Arthroderma gypseum (strain ATCC MYA-4604 / CBS 118893) (Microsporum gypseum).